The primary structure comprises 177 residues: Coatomer subunit zeta-1 (177 aa).

Met1 bears the N-acetylmethionine mark.

It belongs to the adaptor complexes small subunit family. In terms of assembly, oligomeric complex that consists of at least the alpha, beta, beta', gamma, delta, epsilon and zeta subunits.

Its subcellular location is the cytoplasm. The protein resides in the golgi apparatus membrane. It is found in the cytoplasmic vesicle. The protein localises to the COPI-coated vesicle membrane. The coatomer is a cytosolic protein complex that binds to dilysine motifs and reversibly associates with Golgi non-clathrin-coated vesicles, which further mediate biosynthetic protein transport from the ER, via the Golgi up to the trans Golgi network. Coatomer complex is required for budding from Golgi membranes, and is essential for the retrograde Golgi-to-ER transport of dilysine-tagged proteins. The zeta subunit may be involved in regulating the coat assembly and, hence, the rate of biosynthetic protein transport due to its association-dissociation properties with the coatomer complex. The protein is Coatomer subunit zeta-1 (COPZ1) of Bos taurus (Bovine).